Consider the following 380-residue polypeptide: NF-kappa-B inhibitor-like protein 1 (380 aa).

The interval 1–34 (MSNPSPQVPEEEASTSVCRPKSSMASTSRRQRRE) is disordered. 2 ANK repeats span residues 64–93 (GQPP…DPAH) and 97–133 (HGDT…IKNK). Disordered regions lie at residues 131 to 166 (KNKD…EWRQ) and 185 to 293 (GDAS…RGSL). A Phosphoserine modification is found at S150. Basic and acidic residues predominate over residues 237–286 (QQEEEQRLFRERARAKEEELRESRARRAQEALGDREPKPTRAGPREEHPR).

Interacts with CACTIN (via N-terminal domain); the interaction occurs in a pro-inflammatory-independent manner.

The protein localises to the nucleus. Its function is as follows. Involved in the regulation of innate immune response. Acts as negative regulator of Toll-like receptor and interferon-regulatory factor (IRF) signaling pathways. Contributes to the negative regulation of transcriptional activation of NF-kappa-B target genes in response to endogenous pro-inflammatory stimuli. The polypeptide is NF-kappa-B inhibitor-like protein 1 (NFKBIL1) (Pan troglodytes (Chimpanzee)).